Here is a 274-residue protein sequence, read N- to C-terminus: Bis(5'-nucleosyl)-tetraphosphatase, symmetrical (274 aa).

It belongs to the Ap4A hydrolase family.

It carries out the reaction P(1),P(4)-bis(5'-adenosyl) tetraphosphate + H2O = 2 ADP + 2 H(+). Its function is as follows. Hydrolyzes diadenosine 5',5'''-P1,P4-tetraphosphate to yield ADP. In Buchnera aphidicola subsp. Acyrthosiphon pisum (strain Tuc7), this protein is Bis(5'-nucleosyl)-tetraphosphatase, symmetrical.